Reading from the N-terminus, the 524-residue chain is Cytochrome P450 4F3 (524 aa).

A helical transmembrane segment spans residues 19-39; sequence WLLLLLAGASCLLAYILTPIY. Cys468 contacts heme.

This sequence belongs to the cytochrome P450 family. Heme is required as a cofactor. As to expression, highest level in polymorphonuclear leukocytes and dendritic cells. Detectable in lymph nodes, spleen, bone marrow and peripheral blood. Highly expressed in ovary. Very low level in liver, kidney, and smooth muscle. Expressed in neutrophils (at protein level).

It localises to the endoplasmic reticulum membrane. The protein resides in the microsome membrane. It carries out the reaction leukotriene B4 + reduced [NADPH--hemoprotein reductase] + O2 = 18-hydroxy-leukotriene B4 + oxidized [NADPH--hemoprotein reductase] + H2O + H(+). The enzyme catalyses leukotriene B4 + reduced [NADPH--hemoprotein reductase] + O2 = 19-hydroxy-leukotriene B4 + oxidized [NADPH--hemoprotein reductase] + H2O + H(+). It functions in the pathway lipid metabolism; leukotriene B4 degradation. In terms of biological role, a cytochrome P450 monooxygenase involved in the metabolism of the pro-inflammatory lipid mediator leukotriene B4 (LTB4). Hydroxylates at the omega-1 and omega-2 positions LTB4. This oxidation step leads to LTB4 inactivation, which is postulated to be a crucial part of the resolution of inflammation. Mechanistically, uses molecular oxygen inserting one oxygen atom into a substrate, and reducing the second into a water molecule, with two electrons provided by NADPH via cytochrome P450 reductase (CPR; NADPH-ferrihemoprotein reductase). The sequence is that of Cytochrome P450 4F3 from Mus musculus (Mouse).